The primary structure comprises 278 residues: Probable endonuclease 4 (278 aa).

The Zn(2+) site is built by H69, H109, E145, D179, H182, H214, D227, H229, and E259.

Belongs to the AP endonuclease 2 family. The cofactor is Zn(2+).

The enzyme catalyses Endonucleolytic cleavage to 5'-phosphooligonucleotide end-products.. Its function is as follows. Endonuclease IV plays a role in DNA repair. It cleaves phosphodiester bonds at apurinic or apyrimidinic (AP) sites, generating a 3'-hydroxyl group and a 5'-terminal sugar phosphate. The polypeptide is Probable endonuclease 4 (Phocaeicola vulgatus (strain ATCC 8482 / DSM 1447 / JCM 5826 / CCUG 4940 / NBRC 14291 / NCTC 11154) (Bacteroides vulgatus)).